Here is a 717-residue protein sequence, read N- to C-terminus: Ribosomal RNA large subunit methyltransferase K/L (717 aa).

Positions 44-155 (DAYKVCIYSY…KQFVNVFLCL (112 aa)) constitute a THUMP domain.

Belongs to the methyltransferase superfamily. RlmKL family.

It localises to the cytoplasm. It catalyses the reaction guanosine(2445) in 23S rRNA + S-adenosyl-L-methionine = N(2)-methylguanosine(2445) in 23S rRNA + S-adenosyl-L-homocysteine + H(+). The enzyme catalyses guanosine(2069) in 23S rRNA + S-adenosyl-L-methionine = N(2)-methylguanosine(2069) in 23S rRNA + S-adenosyl-L-homocysteine + H(+). Specifically methylates the guanine in position 2445 (m2G2445) and the guanine in position 2069 (m7G2069) of 23S rRNA. In Francisella tularensis subsp. tularensis (strain WY96-3418), this protein is Ribosomal RNA large subunit methyltransferase K/L.